A 757-amino-acid polypeptide reads, in one-letter code: E3 ubiquitin-protein ligase RNF12-B (757 aa).

Residues 1–10 (MESADSTGKG) are compositionally biased toward polar residues. 3 disordered regions span residues 1 to 29 (MESA…LDRE), 68 to 519 (LQQI…TYES), and 619 to 652 (EPAE…GGVT). Residues 11–21 (STEQSESQRQS) are compositionally biased toward low complexity. Polar residues-rich tracts occupy residues 110 to 138 (SVRQ…NPNS) and 147 to 163 (INVN…SLDQ). Tandem repeats lie at residues 197 to 202 (PESVDE), 203 to 208 (PVSVAE), 209 to 214 (PVSVAE), 215 to 220 (PVSVAE), 221 to 226 (PESVAE), 227 to 232 (PESVAA), 237 to 242 (PESVPE), 243 to 248 (PESVPE), 249 to 254 (PESVPE), 255 to 260 (PESVPE), 261 to 266 (PESVPE), 267 to 272 (PESVPE), 273 to 278 (PESVPE), 279 to 284 (PESVPE), 285 to 290 (PESVPE), 291 to 296 (PESVPE), 297 to 302 (PESVPE), 303 to 308 (PESVPE), 309 to 314 (PESIAE), 315 to 320 (PESVPV), and 321 to 326 (PESVPV). A 21 X 6 AA approximate repeats of P-[EV]-S-V-[PA]-[EV] region spans residues 197-326 (PESVDEPVSV…SVPVPESVPV (130 aa)). A compositionally biased stretch (low complexity) spans 202 to 237 (EPVSVAEPVSVAEPVSVAEPESVAEPESVAASVPVP). Positions 245–313 (SVPEPESVPE…ESVPEPESIA (69 aa)) are enriched in acidic residues. A compositionally biased stretch (low complexity) spans 314-327 (EPESVPVPESVPVA). Over residues 352-367 (RSPDQRRTRARTDRSR) the composition is skewed to basic and acidic residues. A compositionally biased stretch (polar residues) spans 383–392 (HSSSQTVDAS). The segment covering 408-424 (SSQVHSSSSNETEGSSR) has biased composition (low complexity). A compositionally biased stretch (polar residues) spans 428-452 (HITARQQALGTEGQSQSTVHLSNPE). Low complexity predominate over residues 453 to 466 (SRSSSQTPQTDSPS). Residues 467–476 (NAETTGTGQR) are compositionally biased toward polar residues. The segment covering 490-500 (RPGDYRQRDSI) has biased composition (basic and acidic residues). Positions 501 to 517 (ANRTRSRSQTPNNTVTY) are enriched in polar residues. The segment at 703–744 (CSVCITEYTEGNKLRKLPCSHEYHIHCIDRWLSENSTCPICR) adopts an RING-type; atypical zinc-finger fold. Positions 754-757 (ESIV) match the PDZ-binding motif.

It belongs to the RNF12 family. As to quaternary structure, forms homodimers through the C-terminal region. The N-terminus interacts with the homeobox of LIM/homeobox factor lhx1/lim1, with lhx3/lim3 and lhx5/lim5, and with the N-terminus of ldb1. In terms of tissue distribution, shows overlapping expression with lhx1/lim1 and ldb1 in the gastrula mesoderm, and expression overlaps with ldb1 throughout early embryogenesis. After gastrulation, expression is gradually restricted to tissues originated from the ectoderm, the neuroectoderm, neural crest and epidermis, and subsequently to the neural tube as well as the head and tailbud region.

It localises to the nucleus. It carries out the reaction S-ubiquitinyl-[E2 ubiquitin-conjugating enzyme]-L-cysteine + [acceptor protein]-L-lysine = [E2 ubiquitin-conjugating enzyme]-L-cysteine + N(6)-ubiquitinyl-[acceptor protein]-L-lysine.. It functions in the pathway protein modification; protein ubiquitination. Its function is as follows. Acts as an E3 ubiquitin-protein ligase specific for ldb1, mediating ubiquitination and proteasome-dependent degradation of excess ldb1 in a RING-dependent manner. Does not degrade ldb1 bound to lhx1/lim1, nor lim1 itself and thus contributes to the establishment of proper ldb1-lhx1/lim1 stoichiometry and the formation of a ldb1-lhx1/lim1 complex. Interferes with Spemann organizer function and suppresses secondary axis formation induced by ldb1 and lhx1/lim1. This chain is E3 ubiquitin-protein ligase RNF12-B (rnf12-b), found in Xenopus laevis (African clawed frog).